The sequence spans 377 residues: Putrescine transport ATP-binding protein PotG (377 aa).

One can recognise an ABC transporter domain in the interval 20 to 250 (LEIRNLTKSY…PTTRYSAEFI (231 aa)). 52–59 (GASGCGKS) is an ATP binding site.

This sequence belongs to the ABC transporter superfamily. In terms of assembly, the complex is composed of two ATP-binding proteins (PotG), two transmembrane proteins (PotH and PotI) and a solute-binding protein (PotF).

It is found in the cell inner membrane. The catalysed reaction is putrescine(out) + ATP + H2O = putrescine(in) + ADP + phosphate + H(+). Transport is feedback inhibited by intracellular polyamines. In terms of biological role, part of the ABC transporter complex PotFGHI involved in putrescine uptake. Responsible for energy coupling to the transport system. Imports putrescine for maintenance of the optimal concentration of polyamines necessary for cell growth in the presence of glucose. The sequence is that of Putrescine transport ATP-binding protein PotG from Escherichia coli (strain K12).